We begin with the raw amino-acid sequence, 115 residues long: MNLIMTLFINITLTSLLVLIAFWLPQLNIYTEKTSPYECGFDPMGSARMPFSMKFFLVAITFLLFDLEIALLLPLPWATQTVNLTTMLTTALLLISLLAVSLAYEWTEKGLEWTE.

3 helical membrane-spanning segments follow: residues 3–23, 55–75, and 84–104; these read LIMT…IAFW, FFLV…LLPL, and LTTM…SLAY.

Belongs to the complex I subunit 3 family. As to quaternary structure, core subunit of respiratory chain NADH dehydrogenase (Complex I) which is composed of 45 different subunits. Interacts with TMEM186. Interacts with TMEM242.

It localises to the mitochondrion inner membrane. It catalyses the reaction a ubiquinone + NADH + 5 H(+)(in) = a ubiquinol + NAD(+) + 4 H(+)(out). Functionally, core subunit of the mitochondrial membrane respiratory chain NADH dehydrogenase (Complex I) which catalyzes electron transfer from NADH through the respiratory chain, using ubiquinone as an electron acceptor. Essential for the catalytic activity of complex I. The protein is NADH-ubiquinone oxidoreductase chain 3 of Ailurus fulgens (Himalayan red panda).